The primary structure comprises 314 residues: Olfactory receptor 10T2 (314 aa).

Residues 1–26 (MRGFNKTTVVTQFILVGFSSLGELQL) are Extracellular-facing. An N-linked (GlcNAc...) asparagine glycan is attached at asparagine 5. A helical membrane pass occupies residues 27 to 47 (LLFVIFLLLYLTILVANVTIM). Topologically, residues 48–55 (AVIRFSWT) are cytoplasmic. Residues 56 to 76 (LHTPMYGFLFILSFSESCYTF) traverse the membrane as a helical segment. Residues 77 to 100 (VIIPQLLVHLLSDTKTISFMACAT) lie on the Extracellular side of the membrane. The cysteines at positions 98 and 190 are disulfide-linked. The helical transmembrane segment at 101–121 (QLFFFLGFACTNCLLIAVMGY) threads the bilayer. The Cytoplasmic segment spans residues 122 to 140 (DRYVAICHPLRYTLIINKR). The helical transmembrane segment at 141–161 (LGLELISLSGATGFFIALVAT) threads the bilayer. The Extracellular segment spans residues 162-198 (NLICDMRFCGPNRVNHYFCDMAPVIKLACTDTHVKEL). A helical membrane pass occupies residues 199–218 (ALFSLSILVIMVPFLLILIS). At 219–237 (YGFIVNTILKIPSAEGKKA) the chain is on the cytoplasmic side. Residues 238–258 (FVTCASHLTVVFVHYGCASII) traverse the membrane as a helical segment. The Extracellular segment spans residues 259–271 (YLRPKSKSASDKD). A helical transmembrane segment spans residues 272–292 (QLVAVTYTVVTPLLNPLVYSL). At 293–314 (RNKEVKTALKRVLGMPVATKMS) the chain is on the cytoplasmic side.

The protein belongs to the G-protein coupled receptor 1 family.

The protein localises to the cell membrane. Odorant receptor. In Homo sapiens (Human), this protein is Olfactory receptor 10T2 (OR10T2).